Here is a 272-residue protein sequence, read N- to C-terminus: Acetylglutamate kinase (272 aa).

Residues 46–47 (GA), R68, and N166 contribute to the substrate site.

The protein belongs to the acetylglutamate kinase family. ArgB subfamily.

It is found in the cytoplasm. It catalyses the reaction N-acetyl-L-glutamate + ATP = N-acetyl-L-glutamyl 5-phosphate + ADP. The protein operates within amino-acid biosynthesis; L-arginine biosynthesis; N(2)-acetyl-L-ornithine from L-glutamate: step 2/4. Catalyzes the ATP-dependent phosphorylation of N-acetyl-L-glutamate. This chain is Acetylglutamate kinase, found in Dehalococcoides mccartyi (strain CBDB1).